Reading from the N-terminus, the 276-residue chain is Small ribosomal subunit protein uS5w (276 aa).

Over residues methionine 1–phenylalanine 15 the composition is skewed to basic and acidic residues. The disordered stretch occupies residues methionine 1–glutamate 42. Positions glycine 16–glycine 28 are enriched in gly residues. One can recognise an S5 DRBM domain in the interval leucine 87–isoleucine 150.

This sequence belongs to the universal ribosomal protein uS5 family.

This is Small ribosomal subunit protein uS5w (RPS2D) from Arabidopsis thaliana (Mouse-ear cress).